A 469-amino-acid chain; its full sequence is UDP-N-acetylmuramate--L-alanine ligase (469 aa).

118–124 lines the ATP pocket; that stretch reads GTHGKTT.

Belongs to the MurCDEF family.

It localises to the cytoplasm. The enzyme catalyses UDP-N-acetyl-alpha-D-muramate + L-alanine + ATP = UDP-N-acetyl-alpha-D-muramoyl-L-alanine + ADP + phosphate + H(+). It functions in the pathway cell wall biogenesis; peptidoglycan biosynthesis. In terms of biological role, cell wall formation. This Ruegeria sp. (strain TM1040) (Silicibacter sp.) protein is UDP-N-acetylmuramate--L-alanine ligase.